The chain runs to 102 residues: uncharacterized protein (102 aa).

The chain crosses the membrane as a helical span at residues 7 to 23 (IVFVSCVILGLAACSSQ).

The protein resides in the membrane. This is an uncharacterized protein from Haemophilus influenzae (strain ATCC 51907 / DSM 11121 / KW20 / Rd).